A 78-amino-acid polypeptide reads, in one-letter code: Putative membrane protein insertion efficiency factor (78 aa).

Belongs to the UPF0161 family.

It localises to the cell membrane. In terms of biological role, could be involved in insertion of integral membrane proteins into the membrane. The polypeptide is Putative membrane protein insertion efficiency factor (Bacillus mycoides (strain KBAB4) (Bacillus weihenstephanensis)).